The following is a 548-amino-acid chain: Elongator complex protein 3 (548 aa).

The Radical SAM core domain occupies 83-373 (RTASGIAVVA…YRVQRDIPMP (291 aa)). [4Fe-4S] cluster is bound by residues Cys100, Cys110, and Cys113. Acetyl-CoA is bound by residues Lys165, 475 to 478 (ELHV), 498 to 500 (FGM), and Tyr531. The N-acetyltransferase domain maps to 397-548 (TECRDVRTRE…EGPYMVKNLY (152 aa)).

This sequence belongs to the ELP3 family. Component of the elongator complex. It depends on [4Fe-4S] cluster as a cofactor.

Its subcellular location is the cytoplasm. It localises to the nucleus. It carries out the reaction uridine(34) in tRNA + acetyl-CoA + S-adenosyl-L-methionine + H2O = 5-(carboxymethyl)uridine(34) in tRNA + 5'-deoxyadenosine + L-methionine + CoA + 2 H(+). Its pathway is tRNA modification; 5-methoxycarbonylmethyl-2-thiouridine-tRNA biosynthesis. Functionally, catalytic tRNA acetyltransferase subunit of the elongator complex which is required for multiple tRNA modifications, including mcm5U (5-methoxycarbonylmethyl uridine), mcm5s2U (5-methoxycarbonylmethyl-2-thiouridine), and ncm5U (5-carbamoylmethyl uridine). In the elongator complex, acts as a tRNA uridine(34) acetyltransferase by mediating formation of carboxymethyluridine in the wobble base at position 34 in tRNAs. Involved in neurogenesis. Involved in somite development. This is Elongator complex protein 3 from Danio rerio (Zebrafish).